Here is a 235-residue protein sequence, read N- to C-terminus: Matrix protein (235 aa).

Belongs to the nucleorhabdovirus type-2 matrix protein family. In terms of assembly, homomultimer. Interacts with nucleoprotein and with the cytoplasmic domain of glycoprotein.

The protein localises to the virion membrane. It is found in the host endomembrane system. In terms of biological role, plays a major role in assembly and budding of virion. Completely covers the ribonucleoprotein coil and keep it in condensed bullet-shaped form. Inhibits viral transcription and stimulates replication. The sequence is that of Matrix protein (M) from Rottboellia (Sorghum).